The sequence spans 238 residues: Ribonuclease PH (238 aa).

Phosphate-binding positions include R86 and 124-126 (GTR).

The protein belongs to the RNase PH family. Homohexameric ring arranged as a trimer of dimers.

The catalysed reaction is tRNA(n+1) + phosphate = tRNA(n) + a ribonucleoside 5'-diphosphate. In terms of biological role, phosphorolytic 3'-5' exoribonuclease that plays an important role in tRNA 3'-end maturation. Removes nucleotide residues following the 3'-CCA terminus of tRNAs; can also add nucleotides to the ends of RNA molecules by using nucleoside diphosphates as substrates, but this may not be physiologically important. Probably plays a role in initiation of 16S rRNA degradation (leading to ribosome degradation) during starvation. This chain is Ribonuclease PH, found in Agrobacterium fabrum (strain C58 / ATCC 33970) (Agrobacterium tumefaciens (strain C58)).